Consider the following 392-residue polypeptide: MFHKFISTLTNKKITQTIMGTINKENIKPAMLLSAFGDACGYKNGIWEFEKSPSRIYEHYEYLGGYKNLKINKKDWRLSDDTIMHIATAIAITRPTNTDNESICKELAKAYIHSMEDMAGRAPGIQTINSVSLMTQTGMRSKVYQWNEIDFSDRAGGCGGSMRSMCIGFKYWSDEQLDTLIELSIESGRITHNNPVGFLGALVSALFASYAIRSIPPKTWPLKLMTEVMPKAREYLEKTSNSSNRNIENYEKGWNYFWNSWKSYLKLRQIPSNPDELKAANDKGIDYPVFPKDYSDYKVRENFYHSISFSGWGGSSGHDSCIIAYDALLGSADNWEEMIKRSVLHGGDNDSTGAIGCCWWGALYGFNGVPECNYEKIEYKSIIEGLAKEISN.

Ser-79, Asp-80, and Asp-81 together coordinate Mg(2+). Lys-109 serves as a coordination point for substrate. The interval 125-127 (IQT) is substrate. Gly-159 serves as a coordination point for substrate. 3 substrate regions span residues 192-194 (HNN), 309-311 (FSG), and 315-316 (SS). Mg(2+) contacts are provided by Asp-348, Asp-350, and Ser-351.

This sequence belongs to the ADP-ribosylglycohydrolase family. In terms of assembly, monomer. It depends on Mg(2+) as a cofactor.

The enzyme catalyses N(omega)-(ADP-D-ribosyl)-L-arginyl-[protein] + H2O = ADP-D-ribose + L-arginyl-[protein]. Specifically acts as an arginine mono-ADP-ribosylhydrolase by mediating the removal of mono-ADP-ribose attached to arginine residues on proteins. This is ADP-ribosylhydrolase ARH1 (adprh) from Dictyostelium discoideum (Social amoeba).